Here is a 430-residue protein sequence, read N- to C-terminus: Glutamate-1-semialdehyde 2,1-aminomutase (430 aa).

Lys267 bears the N6-(pyridoxal phosphate)lysine mark.

The protein belongs to the class-III pyridoxal-phosphate-dependent aminotransferase family. HemL subfamily. In terms of assembly, homodimer. Pyridoxal 5'-phosphate serves as cofactor.

It is found in the cytoplasm. It catalyses the reaction (S)-4-amino-5-oxopentanoate = 5-aminolevulinate. It functions in the pathway porphyrin-containing compound metabolism; protoporphyrin-IX biosynthesis; 5-aminolevulinate from L-glutamyl-tRNA(Glu): step 2/2. The chain is Glutamate-1-semialdehyde 2,1-aminomutase from Sulfurovum sp. (strain NBC37-1).